The primary structure comprises 438 residues: Flotillin-2 (438 aa).

It belongs to the band 7/mec-2 family. Flotillin subfamily. In terms of assembly, heterooligomeric complex of flotillins 1 and 2.

It is found in the membrane. In terms of biological role, may play a role in axon growth and regeneration. May be involved in epidermal cell adhesion and epidermal structure and function. In Drosophila melanogaster (Fruit fly), this protein is Flotillin-2.